A 227-amino-acid chain; its full sequence is Cytochrome c oxidase subunit 2 (227 aa).

Residues methionine 1–serine 14 are Mitochondrial intermembrane-facing. Residues proline 15–methionine 45 form a helical membrane-spanning segment. The Mitochondrial matrix segment spans residues leucine 46–glutamine 59. Residues methionine 60–threonine 87 traverse the membrane as a helical segment. The Mitochondrial intermembrane segment spans residues aspartate 88–serine 227. Cu cation-binding residues include histidine 161, cysteine 196, glutamate 198, cysteine 200, histidine 204, and methionine 207. Glutamate 198 provides a ligand contact to Mg(2+).

The protein belongs to the cytochrome c oxidase subunit 2 family. As to quaternary structure, component of the cytochrome c oxidase (complex IV, CIV), a multisubunit enzyme composed of 14 subunits. The complex is composed of a catalytic core of 3 subunits MT-CO1, MT-CO2 and MT-CO3, encoded in the mitochondrial DNA, and 11 supernumerary subunits COX4I, COX5A, COX5B, COX6A, COX6B, COX6C, COX7A, COX7B, COX7C, COX8 and NDUFA4, which are encoded in the nuclear genome. The complex exists as a monomer or a dimer and forms supercomplexes (SCs) in the inner mitochondrial membrane with NADH-ubiquinone oxidoreductase (complex I, CI) and ubiquinol-cytochrome c oxidoreductase (cytochrome b-c1 complex, complex III, CIII), resulting in different assemblies (supercomplex SCI(1)III(2)IV(1) and megacomplex MCI(2)III(2)IV(2)). Found in a complex with TMEM177, COA6, COX18, COX20, SCO1 and SCO2. Interacts with TMEM177 in a COX20-dependent manner. Interacts with COX20. Interacts with COX16. The cofactor is Cu cation.

It is found in the mitochondrion inner membrane. It catalyses the reaction 4 Fe(II)-[cytochrome c] + O2 + 8 H(+)(in) = 4 Fe(III)-[cytochrome c] + 2 H2O + 4 H(+)(out). Functionally, component of the cytochrome c oxidase, the last enzyme in the mitochondrial electron transport chain which drives oxidative phosphorylation. The respiratory chain contains 3 multisubunit complexes succinate dehydrogenase (complex II, CII), ubiquinol-cytochrome c oxidoreductase (cytochrome b-c1 complex, complex III, CIII) and cytochrome c oxidase (complex IV, CIV), that cooperate to transfer electrons derived from NADH and succinate to molecular oxygen, creating an electrochemical gradient over the inner membrane that drives transmembrane transport and the ATP synthase. Cytochrome c oxidase is the component of the respiratory chain that catalyzes the reduction of oxygen to water. Electrons originating from reduced cytochrome c in the intermembrane space (IMS) are transferred via the dinuclear copper A center (CU(A)) of subunit 2 and heme A of subunit 1 to the active site in subunit 1, a binuclear center (BNC) formed by heme A3 and copper B (CU(B)). The BNC reduces molecular oxygen to 2 water molecules using 4 electrons from cytochrome c in the IMS and 4 protons from the mitochondrial matrix. The polypeptide is Cytochrome c oxidase subunit 2 (MT-CO2) (Galeopterus variegatus (Malayan flying lemur)).